A 282-amino-acid chain; its full sequence is Biotin synthase (282 aa).

The Radical SAM core domain occupies 1 to 228; the sequence is MQEIFLCSIS…NARLMVAGGR (228 aa). Cys17, Cys21, and Cys24 together coordinate [4Fe-4S] cluster. [2Fe-2S] cluster is bound by residues Cys61, Cys96, Cys154, and Arg221.

This sequence belongs to the radical SAM superfamily. Biotin synthase family. As to quaternary structure, homodimer. [4Fe-4S] cluster is required as a cofactor. Requires [2Fe-2S] cluster as cofactor.

It carries out the reaction (4R,5S)-dethiobiotin + (sulfur carrier)-SH + 2 reduced [2Fe-2S]-[ferredoxin] + 2 S-adenosyl-L-methionine = (sulfur carrier)-H + biotin + 2 5'-deoxyadenosine + 2 L-methionine + 2 oxidized [2Fe-2S]-[ferredoxin]. It participates in cofactor biosynthesis; biotin biosynthesis; biotin from 7,8-diaminononanoate: step 2/2. Catalyzes the conversion of dethiobiotin (DTB) to biotin by the insertion of a sulfur atom into dethiobiotin via a radical-based mechanism. This is Biotin synthase from Helicobacter pylori (strain P12).